Reading from the N-terminus, the 532-residue chain is Berberine bridge enzyme-like 23 (532 aa).

A signal peptide spans 1–22 (MRTLEAFALSLFLVFLVKWVNS). An intrachain disulfide couples cysteine 36 to cysteine 102. Asparagine 78 carries an N-linked (GlcNAc...) asparagine glycan. The FAD-binding PCMH-type domain maps to 80–256 (TSQKPILIVT…LSWKVKLVRV (177 aa)). Residues 117-180 (HDYEGLSYLS…KIHGFPAGTC (64 aa)) constitute a cross-link (6-(S-cysteinyl)-8alpha-(pros-histidyl)-FAD (His-Cys)). N-linked (GlcNAc...) asparagine glycans are attached at residues asparagine 272 and asparagine 487.

The protein belongs to the oxygen-dependent FAD-linked oxidoreductase family. FAD is required as a cofactor. Post-translationally, the FAD cofactor is bound via a bicovalent 6-S-cysteinyl, 8alpha-N1-histidyl FAD linkage. As to expression, accumulates in cell walls of etiolated hypocotyls.

The protein localises to the secreted. It is found in the cell wall. In Arabidopsis thaliana (Mouse-ear cress), this protein is Berberine bridge enzyme-like 23.